The following is a 2248-amino-acid chain: Putative Polycomb group protein ASXL3 (2248 aa).

The 75-residue stretch at 10-84 folds into the HTH HARE-type domain; it reads RTWAEAARLA…KSGLYALKKE (75 aa). Positions 156-232 are disordered; it reads ALKQALRQQQ…GKQTSQHLKR (77 aa). Over residues 203–216 the composition is skewed to basic and acidic residues; the sequence is KNGEADSSDKEMKH. A compositionally biased stretch (polar residues) spans 219 to 228; sequence KSPTGKQTSQ. Residues 254 to 363 enclose the DEUBAD domain; the sequence is PGSILVNTNL…FERFYGEKLG (110 aa). 11 disordered regions span residues 368–414, 547–583, 607–643, 703–726, 762–853, 869–1052, 1123–1152, 1183–1203, 1431–1462, 1573–1596, and 1990–2068; these read ESVK…PASP, TSSMTHVSDTEHKESETAVETSTPKIKTGSSSLEGQF, CISETSFSSESPEGACTSLPSPGGETQSTSEESCTPA, EASPVSNLPLTSETSPMSDLPLTS, ERMA…ASIP, LQRT…TGAR, TSKETRLPPPLSSKEGPPNLEVSSTPETKM, QQSLNPSKLPETATDLSVHSS, KLSAESLDKNSGPRNRADNSGKPQQPPGGFAP, TAPSHNFAEQARGPAPFKSEADTT, and LSPN…KRLS. Polar residues-rich tracts occupy residues 371-389, 395-407, 564-580, 607-617, and 624-643; these read KLTTGPNNAGAQSSSSCGT, SAQTALAEQQPKS, AVETSTPKIKTGSSSLE, CISETSFSSES, and SLPSPGGETQSTSEESCTPA. Positions 796 to 818 are enriched in polar residues; the sequence is NLTSQQKNLSNTPEPIIMSSSSI. Residues 937 to 949 show a composition bias toward low complexity; that stretch reads SHTSKSSEPSKSP. Composition is skewed to basic and acidic residues over residues 950-968, 975-987, and 997-1008; these read DGIRNESRDSEISKRKTAE, CKEKRARIEDDQS, and PEKEQPPREEPR. Residues 1036-1046 show a composition bias toward polar residues; sequence RASTSTSVSGG. Over residues 2016–2046 the composition is skewed to pro residues; sequence HPPPPPPPPPPPPLALPPPPPPPPPLPPPLP. The PHD-type; atypical zinc-finger motif lies at 2210 to 2247; sequence ELKCSCRLKAMIVCKGCGAFCHDDCIGPSKLCVACLVV.

It belongs to the Asx family. Core component of the polycomb repressive deubiquitinase (PR-DUB) complex, at least composed of BAP1, one of ASXL1, ASXL2 or (probably) ASXL3, and one of MBD5 or MBD6. Distinct combinations of ASXL and MBD proteins may preferentially bind specific histone modification marks. The PR-DUB core associates with a number of accessory proteins, including FOXK1, FOXK2, KDM1B, HCFC1 and OGT; KDM1B specifically associates with ASXL2 PR-DUB complexes. Interacts (via PHD domain) with MBD5 and MBD6 (via MBD domain); the interaction is probably direct and mediates association of MBD proteins with the PR-DUB core. Expressed in pancreatic islets, testis, neuroblastoma, head and neck tumor.

It localises to the nucleus. Its function is as follows. Putative Polycomb group (PcG) protein. PcG proteins act by forming multiprotein complexes, which are required to maintain the transcriptionally repressive state of homeotic genes throughout development. PcG proteins are not required to initiate repression, but to maintain it during later stages of development. They probably act via methylation of histones, rendering chromatin heritably changed in its expressibility. Non-catalytic component of the PR-DUB complex, a complex that specifically mediates deubiquitination of histone H2A monoubiquitinated at 'Lys-119' (H2AK119ub1). The PR-DUB complex is an epigenetic regulator of gene expression and acts as a transcriptional coactivator, affecting genes involved in development, cell communication, signaling, cell proliferation and cell viability. ASXL1, ASXL2 and ASXL3 function redundantly in the PR-DUB complex and are essential for chromatin recruitment and transcriptional activation of associated genes. The sequence is that of Putative Polycomb group protein ASXL3 (ASXL3) from Homo sapiens (Human).